Reading from the N-terminus, the 450-residue chain is Phosphoglucosamine mutase (450 aa).

Ser-102 serves as the catalytic Phosphoserine intermediate. Mg(2+) is bound by residues Ser-102, Asp-244, Asp-246, and Asp-248. Ser-102 carries the post-translational modification Phosphoserine.

This sequence belongs to the phosphohexose mutase family. Requires Mg(2+) as cofactor. In terms of processing, activated by phosphorylation.

It carries out the reaction alpha-D-glucosamine 1-phosphate = D-glucosamine 6-phosphate. Its function is as follows. Catalyzes the conversion of glucosamine-6-phosphate to glucosamine-1-phosphate. The polypeptide is Phosphoglucosamine mutase (Solidesulfovibrio magneticus (strain ATCC 700980 / DSM 13731 / RS-1) (Desulfovibrio magneticus)).